We begin with the raw amino-acid sequence, 192 residues long: Adenine phosphoribosyltransferase (192 aa).

This sequence belongs to the purine/pyrimidine phosphoribosyltransferase family. In terms of assembly, homodimer.

It localises to the cytoplasm. It carries out the reaction AMP + diphosphate = 5-phospho-alpha-D-ribose 1-diphosphate + adenine. Its pathway is purine metabolism; AMP biosynthesis via salvage pathway; AMP from adenine: step 1/1. Its function is as follows. Catalyzes a salvage reaction resulting in the formation of AMP, that is energically less costly than de novo synthesis. The polypeptide is Adenine phosphoribosyltransferase (Corynebacterium efficiens (strain DSM 44549 / YS-314 / AJ 12310 / JCM 11189 / NBRC 100395)).